A 754-amino-acid polypeptide reads, in one-letter code: MDGKVNNNPPRSRHRRTSSLEEVVDPFSTPDVYYGPKSDPSKLLSKNRFTRTRTFSVAEPGGGKGHSSSYTSPYFDTTVPLRRRGSEDDSYSASQGQRRFYIEDVDKTLKELLASEDTDGNYQITIEDTGPKVIRVGTVNSNGYKHVHIRGTYMLSNLLQELTLAKLFNRKQVILDEARLNENPVNRMTRLISGQFWKSLTRRIDSNNIAKIAYDTKIDTPKAKNPRIYVPYNCQDEYQQLVQWSEMDPSLQLEVNYLPKDITPEFVKSLNDKPGLLCLAMESHMDPVTGEETWVGFPYAVPGGRFNELYGWDSYFMALGLLESNKLDVARGMVEHFIFEIDHYGKILNANRSYYLCRSQPPFLTDMALQVCRKMGGDKNPVAVDLLRRAFKAAIKEYLTVWTASPRLDEKTGLSCYHPDGIGIPPETEPGHFDSILRKYAEKYNVSIPEFRDLYNSQKVHEPDLDVFFLHDRGVRESGHDTTYRFENVCAYLATIDLNSLLYKYEVDIAYVIKKYFGDNFEGLPEGHRTSNDWEKLAEVRKERIDKYLWDEETGFYYDYNVKTEKRTSYESVTTFWALWAGMSSQEQAQRMVENALPKLEEFGGLVACTARSRGELSLDRPTRQWDYPFGWAPHQILVWDGLVRYGYENHTRRLAYRWLFLMTKAFVDYNGIVVEKYDVTRGTDPHRVDAEYGNQGADFKGVATEGFGWVNSSYLLGMKYMNNFARRALGTCVTPKVFFGRLPPKEKKKYGLE.

The span at 1–10 shows a compositional bias: polar residues; that stretch reads MDGKVNNNPP. Disordered stretches follow at residues 1 to 47 and 54 to 73; these read MDGK…LSKN and TFSV…YTSP. Positions 117, 119, 121, 123, and 128 each coordinate Ca(2+). Residues Arg305, 312 to 313, Asn349, 358 to 360, Glu427, Arg476, and Gly479 each bind substrate; these read WD and RSQ. Active-site proton donor/acceptor residues include Asp481 and Glu676.

Belongs to the glycosyl hydrolase 37 family. Ca(2+) is required as a cofactor.

The protein localises to the cytoplasm. It carries out the reaction alpha,alpha-trehalose + H2O = alpha-D-glucose + beta-D-glucose. Its pathway is carbohydrate degradation. In terms of biological role, hydrolyzes intracellular trehalose to glucose. The disaccharide trehalose serves as a storage molecule for energy and carbohydrates that is mobilized during nutrient stress. This is Cytosolic neutral trehalase from Kluyveromyces lactis (strain ATCC 8585 / CBS 2359 / DSM 70799 / NBRC 1267 / NRRL Y-1140 / WM37) (Yeast).